Consider the following 318-residue polypeptide: NADH-ubiquinone oxidoreductase chain 1 (318 aa).

Transmembrane regions (helical) follow at residues 3 to 23 (LINL…LTLL), 69 to 89 (MLFI…WTPL), 102 to 122 (MLFI…SGWA), 144 to 164 (VTLA…TLLS), 171 to 191 (YIWL…STLA), 222 to 242 (LFFL…IILF), 253 to 273 (ELYT…FLWI), and 294 to 314 (LPLT…LAGI).

The protein belongs to the complex I subunit 1 family. In terms of assembly, core subunit of respiratory chain NADH dehydrogenase (Complex I) which is composed of 45 different subunits.

It localises to the mitochondrion inner membrane. It catalyses the reaction a ubiquinone + NADH + 5 H(+)(in) = a ubiquinol + NAD(+) + 4 H(+)(out). In terms of biological role, core subunit of the mitochondrial membrane respiratory chain NADH dehydrogenase (Complex I) which catalyzes electron transfer from NADH through the respiratory chain, using ubiquinone as an electron acceptor. Essential for the catalytic activity and assembly of complex I. The chain is NADH-ubiquinone oxidoreductase chain 1 (MT-ND1) from Murina florium (Flores tube-nosed bat).